A 61-amino-acid chain; its full sequence is Small ribosomal subunit protein uS14 (61 aa).

Positions 24, 27, 40, and 43 each coordinate Zn(2+).

The protein belongs to the universal ribosomal protein uS14 family. Zinc-binding uS14 subfamily. In terms of assembly, part of the 30S ribosomal subunit. Contacts proteins S3 and S10. The cofactor is Zn(2+).

Binds 16S rRNA, required for the assembly of 30S particles and may also be responsible for determining the conformation of the 16S rRNA at the A site. In Syntrophobacter fumaroxidans (strain DSM 10017 / MPOB), this protein is Small ribosomal subunit protein uS14.